The following is a 644-amino-acid chain: Putative aldehyde dehydrogenase-like protein YHR039C (644 aa).

An N-linked (GlcNAc...) asparagine glycan is attached at N15. The active-site Proton acceptor is the E354. C389 functions as the Nucleophile in the catalytic mechanism. Residues N565 and N627 are each glycosylated (N-linked (GlcNAc...) asparagine).

Belongs to the aldehyde dehydrogenase family. In terms of processing, N-glycosylated.

It localises to the endoplasmic reticulum. The protein is Putative aldehyde dehydrogenase-like protein YHR039C (MSC7) of Saccharomyces cerevisiae (strain ATCC 204508 / S288c) (Baker's yeast).